The chain runs to 515 residues: Maturase K (515 aa).

Belongs to the intron maturase 2 family. MatK subfamily.

The protein localises to the plastid. The protein resides in the chloroplast. Functionally, usually encoded in the trnK tRNA gene intron. Probably assists in splicing its own and other chloroplast group II introns. The polypeptide is Maturase K (Alpinia zerumbet (Shell ginger)).